The chain runs to 340 residues: Branched-chain-amino-acid aminotransferase (340 aa).

N6-(pyridoxal phosphate)lysine is present on K187.

The protein belongs to the class-IV pyridoxal-phosphate-dependent aminotransferase family. Pyridoxal 5'-phosphate serves as cofactor.

The enzyme catalyses L-leucine + 2-oxoglutarate = 4-methyl-2-oxopentanoate + L-glutamate. It carries out the reaction L-isoleucine + 2-oxoglutarate = (S)-3-methyl-2-oxopentanoate + L-glutamate. It catalyses the reaction L-valine + 2-oxoglutarate = 3-methyl-2-oxobutanoate + L-glutamate. It participates in amino-acid biosynthesis; L-isoleucine biosynthesis; L-isoleucine from 2-oxobutanoate: step 4/4. The protein operates within amino-acid biosynthesis; L-leucine biosynthesis; L-leucine from 3-methyl-2-oxobutanoate: step 4/4. Its pathway is amino-acid biosynthesis; L-valine biosynthesis; L-valine from pyruvate: step 4/4. Functionally, acts on leucine, isoleucine and valine. The chain is Branched-chain-amino-acid aminotransferase (ilvE) from Helicobacter pylori (strain J99 / ATCC 700824) (Campylobacter pylori J99).